A 609-amino-acid chain; its full sequence is Pentatricopeptide repeat-containing protein At5g13770, chloroplastic (609 aa).

The N-terminal 44 residues, Met1–Arg44, are a transit peptide targeting the chloroplast. PPR repeat units follow at residues Glu103–Pro137, Asp138–Asp168, Ala172–Pro207, Ser208–Phe242, Ser247–Glu281, Ser282–Lys316, Asp317–Val351, Thr352–Ala386, Gly387–Lys421, Cys422–Pro456, Asn457–Pro491, Asp492–Ile526, and Asp527–Leu561.

The protein belongs to the PPR family. P subfamily.

It is found in the plastid. The protein resides in the chloroplast. In Arabidopsis thaliana (Mouse-ear cress), this protein is Pentatricopeptide repeat-containing protein At5g13770, chloroplastic.